Consider the following 207-residue polypeptide: Serotonin N-acetyltransferase (207 aa).

Residues 1–28 (MSMQSTHPPKPEAPRLPPGIPESPSCQR) are disordered. Residue threonine 31 is modified to Phosphothreonine; by PKA. Residues 35 to 202 (SEFRCLTPED…CSLRDHPFLR (168 aa)) form the N-acetyltransferase domain. Leucine 124 contacts substrate. Acetyl-CoA-binding positions include 124–126 (LAV) and 132–137 (QQGRGP). Methionine 159 contacts substrate. Residue 168 to 170 (YER) participates in acetyl-CoA binding. Phosphoserine is present on serine 205.

The protein belongs to the acetyltransferase family. AANAT subfamily. Monomer. Interacts with several 14-3-3 proteins, including YWHAB, YWHAE, YWHAG and YWHAZ, preferentially when phosphorylated at Thr-31. Phosphorylation on Ser-205 also allows binding to YWHAZ, but with lower affinity. The interaction with YWHAZ considerably increases affinity for arylalkylamines and acetyl-CoA and protects the enzyme from dephosphorylation and proteasomal degradation. It may also prevent thiol-dependent inactivation. Post-translationally, cAMP-dependent phosphorylation on both N-terminal Thr-31 and C-terminal Ser-205 regulates AANAT activity by promoting interaction with 14-3-3 proteins.

The protein resides in the cytoplasm. It carries out the reaction a 2-arylethylamine + acetyl-CoA = an N-acetyl-2-arylethylamine + CoA + H(+). It participates in aromatic compound metabolism; melatonin biosynthesis; melatonin from serotonin: step 1/2. Controls the night/day rhythm of melatonin production in the pineal gland. Catalyzes the N-acetylation of serotonin into N-acetylserotonin, the penultimate step in the synthesis of melatonin. In Pan troglodytes (Chimpanzee), this protein is Serotonin N-acetyltransferase (AANAT).